The sequence spans 124 residues: Fluoride-specific ion channel FluC (124 aa).

Helical transmembrane passes span 5–25 (ILAV…AGTW), 38–58 (TLAV…WFLL), 69–89 (GLIV…LDTL), and 97–117 (ALIA…ATWA). Na(+) is bound by residues glycine 76 and threonine 79.

The protein belongs to the fluoride channel Fluc/FEX (TC 1.A.43) family.

The protein resides in the cell inner membrane. The enzyme catalyses fluoride(in) = fluoride(out). Its activity is regulated as follows. Na(+) is not transported, but it plays an essential structural role and its presence is essential for fluoride channel function. Its function is as follows. Fluoride-specific ion channel. Important for reducing fluoride concentration in the cell, thus reducing its toxicity. This is Fluoride-specific ion channel FluC from Pseudomonas fluorescens (strain SBW25).